Reading from the N-terminus, the 299-residue chain is MGAQLRVYTQKIKSAQTTKKITRAMELISASRIQKAQQRMAASAPYSRAVTRAVSAVATFSNVDHILTTEPEKVERAAIVIFASDRGLAGAFSSSVLKESEQLAELLRSQGKEIVYYLVGRKAVGYFKFRKRDSERIWTGSTEKPEFETAKSIGDALVEKFVTPASEGGVDEIHIVFNRFVSIATQKPEVVRLLPLEVVEGVEAPVEGAVLPLYEFEPEVGDVLDALLPVYIESRIFNAMLQSAASEHAARQKAMKSASDNADKLVTTYTRLRNNARQTEITQQISEIVGGADALASSK.

Belongs to the ATPase gamma chain family. F-type ATPases have 2 components, CF(1) - the catalytic core - and CF(0) - the membrane proton channel. CF(1) has five subunits: alpha(3), beta(3), gamma(1), delta(1), epsilon(1). CF(0) has three main subunits: a, b and c.

It localises to the cell membrane. Produces ATP from ADP in the presence of a proton gradient across the membrane. The gamma chain is believed to be important in regulating ATPase activity and the flow of protons through the CF(0) complex. This Clavibacter sepedonicus (Clavibacter michiganensis subsp. sepedonicus) protein is ATP synthase gamma chain.